Here is a 544-residue protein sequence, read N- to C-terminus: NAD(P)H-quinone oxidoreductase chain 4 (544 aa).

14 helical membrane-spanning segments follow: residues 29-49, 60-80, 115-135, 139-159, 161-181, 193-213, 234-254, 268-288, 302-322, 339-359, 360-380, 400-422, 442-462, and 488-508; these read FPWL…IPLV, WYAL…YLNG, LILL…PVTF, LFFF…AVQD, LLFF…LAIW, FILY…AMAF, GFQA…LPIV, TAPV…YALF, FAPL…LTSF, MGFV…GAML, QMIS…ATYD, MFAM…GFVS, IVID…LLSM, and IYII…PKLV.

This sequence belongs to the complex I subunit 4 family.

Its subcellular location is the cellular thylakoid membrane. The catalysed reaction is a plastoquinone + NADH + (n+1) H(+)(in) = a plastoquinol + NAD(+) + n H(+)(out). It catalyses the reaction a plastoquinone + NADPH + (n+1) H(+)(in) = a plastoquinol + NADP(+) + n H(+)(out). Functionally, NDH-1 shuttles electrons from NAD(P)H, via FMN and iron-sulfur (Fe-S) centers, to quinones in the respiratory chain. The immediate electron acceptor for the enzyme in this species is believed to be plastoquinone. Couples the redox reaction to proton translocation (for every two electrons transferred, four hydrogen ions are translocated across the cytoplasmic membrane), and thus conserves the redox energy in a proton gradient. In Synechococcus sp. (strain RCC307), this protein is NAD(P)H-quinone oxidoreductase chain 4.